A 298-amino-acid polypeptide reads, in one-letter code: MESFQKVEKIGEGTYGVVYKAKNKVTGETVALKKIRLDTETEGVPSTAIREISLLKELNHPNIVKLHDVIHTENKLYLVFEFLHQDLKRFMDSSTVTGISLPLVKSYLFQLLQGLAFCHSHRVLHRDLKPQNLLINAQGEIKLADFGLARAFGVPVRTYTHEVVTLWYRAPEILLGCKYYSTAVDIWSLGCIFAEMITRKALFPGDSEIDQLFRIFRTLGTPDESIWPGVTSMPDYKPSFPKWARQDLSKVVPPLDEDGRDLLGQMLIYDPNKRISAKNALVHRFFRDVTMPVPPLRL.

A Protein kinase domain is found at 4 to 286 (FQKVEKIGEG…AKNALVHRFF (283 aa)). Residues 10-18 (IGEGTYGVV), Lys-33, 81-83 (EFL), and Asp-86 contribute to the ATP site. A Phosphothreonine modification is found at Thr-14. At Tyr-15 the chain carries Phosphotyrosine. The active-site Proton acceptor is Asp-127. Residues 129–132 (KPQN) and Asp-145 each bind ATP. Phosphothreonine; by CAK is present on Thr-160.

The protein belongs to the protein kinase superfamily. CMGC Ser/Thr protein kinase family. CDC2/CDKX subfamily.

The enzyme catalyses L-seryl-[protein] + ATP = O-phospho-L-seryl-[protein] + ADP + H(+). It catalyses the reaction L-threonyl-[protein] + ATP = O-phospho-L-threonyl-[protein] + ADP + H(+). Phosphorylation at Thr-14 or Tyr-15 inactivates the enzyme, while phosphorylation at Thr-160 activates it. Functionally, serine/threonine-protein kinase involved in the control of the cell cycle; essential for meiosis, but dispensable for mitosis. Triggers duplication of centrosomes and DNA. Acts at the G1-S transition to promote the E2F transcriptional program and the initiation of DNA synthesis, and modulates G2 progression; controls the timing of entry into mitosis/meiosis by controlling the subsequent activation of cyclin B/CDK1 by phosphorylation, and coordinates the activation of cyclin B/CDK1 at the centrosome and in the nucleus. Crucial role in orchestrating a fine balance between cellular proliferation, cell death, and DNA repair in embryonic stem cells (ESCs). Activity of CDK2 is maximal during S phase and G2; activated by interaction with cyclin E during the early stages of DNA synthesis to permit G1-S transition, and subsequently activated by cyclin A2 (cyclin A1 in germ cells) during the late stages of DNA replication to drive the transition from S phase to mitosis, the G2 phase. This is Cyclin-dependent kinase 2 (cdk2) from Carassius auratus (Goldfish).